Reading from the N-terminus, the 210-residue chain is Endonuclease III (210 aa).

The region spanning 108–127 (FKALIKLPGVGRKTANVVLN) is the HhH domain. Residues cysteine 187, cysteine 194, cysteine 197, and cysteine 203 each contribute to the [4Fe-4S] cluster site.

Belongs to the Nth/MutY family. [4Fe-4S] cluster is required as a cofactor.

The enzyme catalyses 2'-deoxyribonucleotide-(2'-deoxyribose 5'-phosphate)-2'-deoxyribonucleotide-DNA = a 3'-end 2'-deoxyribonucleotide-(2,3-dehydro-2,3-deoxyribose 5'-phosphate)-DNA + a 5'-end 5'-phospho-2'-deoxyribonucleoside-DNA + H(+). In terms of biological role, DNA repair enzyme that has both DNA N-glycosylase activity and AP-lyase activity. The DNA N-glycosylase activity releases various damaged pyrimidines from DNA by cleaving the N-glycosidic bond, leaving an AP (apurinic/apyrimidinic) site. The AP-lyase activity cleaves the phosphodiester bond 3' to the AP site by a beta-elimination, leaving a 3'-terminal unsaturated sugar and a product with a terminal 5'-phosphate. This Rickettsia conorii (strain ATCC VR-613 / Malish 7) protein is Endonuclease III.